A 92-amino-acid polypeptide reads, in one-letter code: Small ribosomal subunit protein uS19c (92 aa).

The protein belongs to the universal ribosomal protein uS19 family.

It localises to the plastid. The protein resides in the cyanelle. Protein S19 forms a complex with S13 that binds strongly to the 16S ribosomal RNA. The sequence is that of Small ribosomal subunit protein uS19c (rps19) from Cyanophora paradoxa.